We begin with the raw amino-acid sequence, 543 residues long: Probable protein kinase UbiB (543 aa).

In terms of domain architecture, Protein kinase spans 123-501 (DFDQQALASA…RVRQGQSRYL (379 aa)). ATP-binding positions include 129–137 (LASASIAQV) and K152. D287 functions as the Proton acceptor in the catalytic mechanism. The next 2 helical transmembrane spans lie at 498–518 (SRYL…LLSG) and 519–539 (DVEV…VIGW).

The protein belongs to the ABC1 family. UbiB subfamily.

Its subcellular location is the cell inner membrane. Its pathway is cofactor biosynthesis; ubiquinone biosynthesis [regulation]. Is probably a protein kinase regulator of UbiI activity which is involved in aerobic coenzyme Q (ubiquinone) biosynthesis. This is Probable protein kinase UbiB from Serratia proteamaculans (strain 568).